The chain runs to 421 residues: D-inositol 3-phosphate glycosyltransferase (421 aa).

His13 serves as a coordination point for 1D-myo-inositol 3-phosphate. Residues 19–20 (QP) and Gly27 each bind UDP-N-acetyl-alpha-D-glucosamine. Residues 24–29 (DAGGMN), Lys82, Tyr115, Thr139, and Arg159 contribute to the 1D-myo-inositol 3-phosphate site. UDP-N-acetyl-alpha-D-glucosamine contacts are provided by Arg233, Lys238, and Val294. Positions 303, 304, and 306 each coordinate Mg(2+). Residues Glu316 and Glu324 each coordinate UDP-N-acetyl-alpha-D-glucosamine. Residue Thr330 participates in Mg(2+) binding.

Belongs to the glycosyltransferase group 1 family. MshA subfamily. In terms of assembly, homodimer.

The enzyme catalyses 1D-myo-inositol 3-phosphate + UDP-N-acetyl-alpha-D-glucosamine = 1D-myo-inositol 2-acetamido-2-deoxy-alpha-D-glucopyranoside 3-phosphate + UDP + H(+). In terms of biological role, catalyzes the transfer of a N-acetyl-glucosamine moiety to 1D-myo-inositol 3-phosphate to produce 1D-myo-inositol 2-acetamido-2-deoxy-glucopyranoside 3-phosphate in the mycothiol biosynthesis pathway. This chain is D-inositol 3-phosphate glycosyltransferase, found in Arthrobacter sp. (strain FB24).